The sequence spans 256 residues: uncharacterized protein (256 aa).

Over residues 201–214 (ACKEGVDSSCKEEG) the composition is skewed to basic and acidic residues. The segment at 201–231 (ACKEGVDSSCKEEGGGCEEEGSGSEEDSDDS) is disordered. Residues 215–231 (GGCEEEGSGSEEDSDDS) are compositionally biased toward acidic residues.

It localises to the mitochondrion. This is an uncharacterized protein from Zea mays (Maize).